The sequence spans 792 residues: Phenylalanine--tRNA ligase beta subunit (792 aa).

Residues 39–147 (AAAFSGVVVG…DNAPIGQDIR (109 aa)) enclose the tRNA-binding domain. Positions 400 to 475 (PERPAVRLRP…RLHGYDAIPA (76 aa)) constitute a B5 domain. Residues Asp-453, Asp-459, Glu-462, and Glu-463 each coordinate Mg(2+). The 94-residue stretch at 698–791 (SRQPAVTRDV…TETSLGARLR (94 aa)) folds into the FDX-ACB domain.

The protein belongs to the phenylalanyl-tRNA synthetase beta subunit family. Type 1 subfamily. In terms of assembly, tetramer of two alpha and two beta subunits. Requires Mg(2+) as cofactor.

It localises to the cytoplasm. The enzyme catalyses tRNA(Phe) + L-phenylalanine + ATP = L-phenylalanyl-tRNA(Phe) + AMP + diphosphate + H(+). In Aromatoleum aromaticum (strain DSM 19018 / LMG 30748 / EbN1) (Azoarcus sp. (strain EbN1)), this protein is Phenylalanine--tRNA ligase beta subunit.